The primary structure comprises 1178 residues: F-box/WD repeat-containing protein A-like protein (1178 aa).

In terms of domain architecture, START spans 1–208 (MQYVNGMDIV…TLPNLIKYIK (208 aa)). Disordered stretches follow at residues 223-296 (KTPD…NLNE), 569-594 (SLIINSPPNSNNHENEKKRKFRDNGI), and 618-649 (SSSSSSTSSSLTFSPPQQLSSPTSSSSSSTFS). 2 stretches are compositionally biased toward low complexity: residues 229-293 (NPNL…SNEN) and 571-580 (IINSPPNSNN). Residues 717–763 (CSLFDLLPYEMIQYIFTLMDATHLIRMSRTCKYFNRICLDDNIWRDL) form the F-box domain. Positions 804–841 (KKSNNSSPLSASSSSSSPSPPLLPPPPPPIPQLPDMLL) are disordered. Low complexity predominate over residues 809 to 820 (SSPLSASSSSSS). Residues 821 to 835 (PSPPLLPPPPPPIPQ) show a composition bias toward pro residues. 7 WD repeats span residues 886–923 (GHKGKISCLQMAPNQIFTGSKDKEFKSWNIATKQCEST), 925–979 (RCGA…IEKE), 981–1017 (RFLYVSNGFIFMKRDIYSYESNTVKLYDSETEQELQM), 1020–1059 (IENTKINHCKIGRFENFCMIACTDKTVKLWDIDSNKTELV), 1062–1100 (GHKGSVNCLDFLNDYQLITGSSDKTIRMWDIRNPSSAIH), 1104–1141 (SHSSKVKAISIYNNLRMCTGDEDSICLWNLEGSNEPNL), and 1146–1178 (NNLSPVECLSIDDETMLAGFSDGEVSYYDFNSK).

Substrate recognition component of a SCF (SKP1-CUL1-F-box protein) E3 ubiquitin-protein ligase complex which mediates the ubiquitination and subsequent proteasomal degradation of target proteins. This Dictyostelium discoideum (Social amoeba) protein is F-box/WD repeat-containing protein A-like protein.